We begin with the raw amino-acid sequence, 346 residues long: Holliday junction branch migration complex subunit RuvB (346 aa).

A compositionally biased stretch (basic and acidic residues) spans 1-16 (MSDADRLITPEKRGED). Residues 1–23 (MSDADRLITPEKRGEDIDTTLRP) are disordered. The large ATPase domain (RuvB-L) stretch occupies residues 1–182 (MSDADRLITP…FGIPVRLAFY (182 aa)). Residues Leu-21, Arg-22, Gly-63, Lys-66, Thr-67, Thr-68, 129–131 (EDF), Arg-172, Tyr-182, and Arg-219 each bind ATP. Residue Thr-67 coordinates Mg(2+). A small ATPAse domain (RuvB-S) region spans residues 183–253 (TVDELELIVR…IADEALTRLL (71 aa)). The interval 256–346 (NMGLDQLDMR…AQFRLTLEDD (91 aa)) is head domain (RuvB-H). Positions 292, 311, and 316 each coordinate DNA.

This sequence belongs to the RuvB family. In terms of assembly, homohexamer. Forms an RuvA(8)-RuvB(12)-Holliday junction (HJ) complex. HJ DNA is sandwiched between 2 RuvA tetramers; dsDNA enters through RuvA and exits via RuvB. An RuvB hexamer assembles on each DNA strand where it exits the tetramer. Each RuvB hexamer is contacted by two RuvA subunits (via domain III) on 2 adjacent RuvB subunits; this complex drives branch migration. In the full resolvosome a probable DNA-RuvA(4)-RuvB(12)-RuvC(2) complex forms which resolves the HJ.

The protein resides in the cytoplasm. The enzyme catalyses ATP + H2O = ADP + phosphate + H(+). In terms of biological role, the RuvA-RuvB-RuvC complex processes Holliday junction (HJ) DNA during genetic recombination and DNA repair, while the RuvA-RuvB complex plays an important role in the rescue of blocked DNA replication forks via replication fork reversal (RFR). RuvA specifically binds to HJ cruciform DNA, conferring on it an open structure. The RuvB hexamer acts as an ATP-dependent pump, pulling dsDNA into and through the RuvAB complex. RuvB forms 2 homohexamers on either side of HJ DNA bound by 1 or 2 RuvA tetramers; 4 subunits per hexamer contact DNA at a time. Coordinated motions by a converter formed by DNA-disengaged RuvB subunits stimulates ATP hydrolysis and nucleotide exchange. Immobilization of the converter enables RuvB to convert the ATP-contained energy into a lever motion, pulling 2 nucleotides of DNA out of the RuvA tetramer per ATP hydrolyzed, thus driving DNA branch migration. The RuvB motors rotate together with the DNA substrate, which together with the progressing nucleotide cycle form the mechanistic basis for DNA recombination by continuous HJ branch migration. Branch migration allows RuvC to scan DNA until it finds its consensus sequence, where it cleaves and resolves cruciform DNA. This Agrobacterium fabrum (strain C58 / ATCC 33970) (Agrobacterium tumefaciens (strain C58)) protein is Holliday junction branch migration complex subunit RuvB.